A 527-amino-acid chain; its full sequence is Catalase (527 aa).

The residue at position 2 (Ala-2) is an N-acetylalanine. A Phosphoserine modification is found at Ser-9. At Lys-13 the chain carries N6-succinyllysine. Active-site residues include His-75 and Asn-148. Positions 194, 201, 203, and 213 each coordinate NADP(+). N6-succinyllysine is present on Lys-221. Lys-233 carries the post-translational modification N6-acetyllysine. Positions 237, 303, 305, and 306 each coordinate NADP(+). At Lys-306 the chain carries N6-acetyllysine; alternate. Lys-306 is subject to N6-succinyllysine; alternate. Tyr-358 contributes to the heme binding site. Residues Ser-417 and Ser-422 each carry the phosphoserine modification. Lys-480 is subject to N6-acetyllysine; alternate. N6-succinyllysine; alternate is present on Lys-480. Lys-499 carries the post-translational modification N6-acetyllysine. Thr-511 is subject to Phosphothreonine. Residues Ser-515 and Ser-517 each carry the phosphoserine modification. The short motif at 524–527 (KANL) is the Microbody targeting signal; atypical element.

It belongs to the catalase family. Homotetramer. Interacts (via microbody targeting signal) with PEX5, monomeric form interacts with PEX5, leading to its translocation into peroxisomes. The cofactor is heme. It depends on NADP(+) as a cofactor.

The protein localises to the peroxisome matrix. The enzyme catalyses 2 H2O2 = O2 + 2 H2O. Its function is as follows. Catalyzes the degradation of hydrogen peroxide (H(2)O(2)) generated by peroxisomal oxidases to water and oxygen, thereby protecting cells from the toxic effects of hydrogen peroxide. Promotes growth of cells including T-cells, B-cells, myeloid leukemia cells, melanoma cells, mastocytoma cells and normal and transformed fibroblast cells. This is Catalase (CAT) from Pongo abelii (Sumatran orangutan).